A 257-amino-acid polypeptide reads, in one-letter code: Imidazole glycerol phosphate synthase subunit HisF (257 aa).

Catalysis depends on residues Asp-11 and Asp-130.

Belongs to the HisA/HisF family. Heterodimer of HisH and HisF.

It is found in the cytoplasm. It carries out the reaction 5-[(5-phospho-1-deoxy-D-ribulos-1-ylimino)methylamino]-1-(5-phospho-beta-D-ribosyl)imidazole-4-carboxamide + L-glutamine = D-erythro-1-(imidazol-4-yl)glycerol 3-phosphate + 5-amino-1-(5-phospho-beta-D-ribosyl)imidazole-4-carboxamide + L-glutamate + H(+). The protein operates within amino-acid biosynthesis; L-histidine biosynthesis; L-histidine from 5-phospho-alpha-D-ribose 1-diphosphate: step 5/9. Its function is as follows. IGPS catalyzes the conversion of PRFAR and glutamine to IGP, AICAR and glutamate. The HisF subunit catalyzes the cyclization activity that produces IGP and AICAR from PRFAR using the ammonia provided by the HisH subunit. The sequence is that of Imidazole glycerol phosphate synthase subunit HisF from Shewanella halifaxensis (strain HAW-EB4).